A 97-amino-acid polypeptide reads, in one-letter code: Large ribosomal subunit protein eL21 (97 aa).

This sequence belongs to the eukaryotic ribosomal protein eL21 family.

The chain is Large ribosomal subunit protein eL21 from Methanosarcina barkeri (strain Fusaro / DSM 804).